The chain runs to 255 residues: MRILVTNDDGIHAPGLDACARIAAALSDDVWVVAPETDQSGVAHSLSLNDPLRLRKVAAQRYAVKGTPTDCVIMAVRHVLIDNPPDLILSGVNRGQNIAEDVSYSGTVAGAIEGTILGIPSIALSQAFGPQTRDNPSYQTAETHGPDVIRTLLAEGIPAGVLINVNFPDRTPDQVAGIAVTAQGRRDQKLMRIDPRKDGRGNDYFWIAFERRSADTVPGSDLRALDEGRISVTPLRVEQTDEPMMTRLAQVFEAR.

4 residues coordinate a divalent metal cation: D8, D9, S40, and N93.

It belongs to the SurE nucleotidase family. The cofactor is a divalent metal cation.

It is found in the cytoplasm. The enzyme catalyses a ribonucleoside 5'-phosphate + H2O = a ribonucleoside + phosphate. In terms of biological role, nucleotidase that shows phosphatase activity on nucleoside 5'-monophosphates. The protein is 5'-nucleotidase SurE of Azorhizobium caulinodans (strain ATCC 43989 / DSM 5975 / JCM 20966 / LMG 6465 / NBRC 14845 / NCIMB 13405 / ORS 571).